The sequence spans 238 residues: Small ribosomal subunit protein uS2c (238 aa).

Belongs to the universal ribosomal protein uS2 family.

Its subcellular location is the plastid. It is found in the chloroplast. The sequence is that of Small ribosomal subunit protein uS2c (rps2) from Nuphar advena (Common spatterdock).